Consider the following 284-residue polypeptide: MSLSIEALLKRSIQSLTLEGSDSPQVDAAVLLCHVLDKPRSYLLTWPEKIVSDEELGNFNALLERRLAGEPIAYIVGYREFWSLPLKVSPTTLIPRPDTERLVEVALDHLTPNAQSILDLGTGTGAIALAIASEMPTLNVIGVDYQDDAVELAKGNAKINHINNVEFRQGSWFEPISLSDKFDIIVSNPPYIDGNDPHLSEGDVRFEPQTALVAEQNGFSDLIHIMQHGREYLLNGGWLMMEHGFEQGEQLRHFFEEHGYINVKTEQDYAGNDRVTLGQWVVDN.

S-adenosyl-L-methionine contacts are provided by residues 121-125, Asp144, Trp172, and Asn188; that span reads GTGTG. 188 to 191 lines the substrate pocket; that stretch reads NPPY.

This sequence belongs to the protein N5-glutamine methyltransferase family. PrmC subfamily.

It catalyses the reaction L-glutaminyl-[peptide chain release factor] + S-adenosyl-L-methionine = N(5)-methyl-L-glutaminyl-[peptide chain release factor] + S-adenosyl-L-homocysteine + H(+). In terms of biological role, methylates the class 1 translation termination release factors RF1/PrfA and RF2/PrfB on the glutamine residue of the universally conserved GGQ motif. This chain is Release factor glutamine methyltransferase, found in Aliivibrio fischeri (strain ATCC 700601 / ES114) (Vibrio fischeri).